The primary structure comprises 352 residues: N-acetyl-gamma-glutamyl-phosphate reductase (352 aa).

Residue cysteine 155 is part of the active site.

Belongs to the NAGSA dehydrogenase family. Type 1 subfamily.

The protein resides in the cytoplasm. It carries out the reaction N-acetyl-L-glutamate 5-semialdehyde + phosphate + NADP(+) = N-acetyl-L-glutamyl 5-phosphate + NADPH + H(+). The protein operates within amino-acid biosynthesis; L-arginine biosynthesis; N(2)-acetyl-L-ornithine from L-glutamate: step 3/4. Its function is as follows. Catalyzes the NADPH-dependent reduction of N-acetyl-5-glutamyl phosphate to yield N-acetyl-L-glutamate 5-semialdehyde. The chain is N-acetyl-gamma-glutamyl-phosphate reductase from Crocosphaera subtropica (strain ATCC 51142 / BH68) (Cyanothece sp. (strain ATCC 51142)).